Reading from the N-terminus, the 494-residue chain is H/ACA ribonucleoprotein complex non-core subunit NAF1 (494 aa).

Methionine 1 is modified (N-acetylmethionine). Disordered stretches follow at residues 18-159, 296-347, and 462-494; these read GTDF…GDDD, GSDA…PGED, and LNLP…GPYY. Over residues 29–41 the composition is skewed to pro residues; sequence APSPGSAPVPGTQ. Positions 112–126 are enriched in acidic residues; sequence ETSDSDSDSDSETDS. A compositionally biased stretch (low complexity) spans 127-145; the sequence is DSSSSSSSSSSSSSSSSSS. The span at 296 to 305 shows a compositional bias: basic and acidic residues; that stretch reads GSDASWKNDQ. Residue serine 315 is modified to Phosphoserine. Positions 324 to 337 are enriched in basic residues; it reads KQRKKSQIQGRKKL. A Glycyl lysine isopeptide (Lys-Gly) (interchain with G-Cter in SUMO2) cross-link involves residue lysine 338. A compositionally biased stretch (pro residues) spans 467–482; the sequence is SLPPPPPPPPLPPPPS. Residues 484–494 show a composition bias toward polar residues; the sequence is GDSNSHFGPYY.

Belongs to the NAF1 family. During assembly of the complex, component of the small nucleolar ribonucleoprotein particles containing H/ACA-type snoRNAs (H/ACA snoRNPs) which contains NOLA2/NHP2, NOLA3/NOP10, NAF1 and DKC1/NOLA4. Interacts directly with DKC1/NOLA4.

It is found in the cytoplasm. Its subcellular location is the nucleus. Its function is as follows. RNA-binding protein required for the maturation of box H/ACA snoRNPs complex and ribosome biogenesis. During assembly of the H/ACA snoRNPs complex, it associates with the complex and disappears during maturation of the complex and is replaced by NOLA1/GAR1 to yield mature H/ACA snoRNPs complex. Probably competes with NOLA1/GAR1 for binding with DKC1/NOLA4. This Homo sapiens (Human) protein is H/ACA ribonucleoprotein complex non-core subunit NAF1 (NAF1).